A 93-amino-acid polypeptide reads, in one-letter code: Pyrimidine/purine nucleoside phosphorylase (93 aa).

This sequence belongs to the nucleoside phosphorylase PpnP family.

The catalysed reaction is a purine D-ribonucleoside + phosphate = a purine nucleobase + alpha-D-ribose 1-phosphate. The enzyme catalyses adenosine + phosphate = alpha-D-ribose 1-phosphate + adenine. It catalyses the reaction cytidine + phosphate = cytosine + alpha-D-ribose 1-phosphate. It carries out the reaction guanosine + phosphate = alpha-D-ribose 1-phosphate + guanine. The catalysed reaction is inosine + phosphate = alpha-D-ribose 1-phosphate + hypoxanthine. The enzyme catalyses thymidine + phosphate = 2-deoxy-alpha-D-ribose 1-phosphate + thymine. It catalyses the reaction uridine + phosphate = alpha-D-ribose 1-phosphate + uracil. It carries out the reaction xanthosine + phosphate = alpha-D-ribose 1-phosphate + xanthine. In terms of biological role, catalyzes the phosphorolysis of diverse nucleosides, yielding D-ribose 1-phosphate and the respective free bases. Can use uridine, adenosine, guanosine, cytidine, thymidine, inosine and xanthosine as substrates. Also catalyzes the reverse reactions. The protein is Pyrimidine/purine nucleoside phosphorylase of Aliivibrio fischeri (strain ATCC 700601 / ES114) (Vibrio fischeri).